We begin with the raw amino-acid sequence, 383 residues long: PqqA peptide cyclase (383 aa).

The 216-residue stretch at 11-226 (PGPPLWLLAE…TNQWREKLAA (216 aa)) folds into the Radical SAM core domain. [4Fe-4S] cluster contacts are provided by C25, C29, and C32.

The protein belongs to the radical SAM superfamily. PqqE family. As to quaternary structure, interacts with PqqD. The interaction is necessary for activity of PqqE. The cofactor is [4Fe-4S] cluster.

The enzyme catalyses [PQQ precursor protein] + S-adenosyl-L-methionine = E-Y cross-linked-[PQQ precursor protein] + 5'-deoxyadenosine + L-methionine + H(+). The protein operates within cofactor biosynthesis; pyrroloquinoline quinone biosynthesis. Catalyzes the cross-linking of a glutamate residue and a tyrosine residue in the PqqA protein as part of the biosynthesis of pyrroloquinoline quinone (PQQ). In Azotobacter vinelandii (strain DJ / ATCC BAA-1303), this protein is PqqA peptide cyclase.